A 259-amino-acid chain; its full sequence is Ribonuclease HII (259 aa).

The RNase H type-2 domain maps to 70-258 (TLIVGIDEVG…VKSLVLGKKE (189 aa)). A divalent metal cation contacts are provided by Asp76, Glu77, and Asp168.

Belongs to the RNase HII family. Mn(2+) is required as a cofactor. Mg(2+) serves as cofactor.

The protein resides in the cytoplasm. It carries out the reaction Endonucleolytic cleavage to 5'-phosphomonoester.. Its function is as follows. Endonuclease that specifically degrades the RNA of RNA-DNA hybrids. The chain is Ribonuclease HII from Streptococcus pneumoniae serotype 2 (strain D39 / NCTC 7466).